A 200-amino-acid polypeptide reads, in one-letter code: Small ribosomal subunit protein uS4 (200 aa).

The tract at residues 22 to 42 (TGKELQKRPYPPGQHGPGQRR) is disordered. One can recognise an S4 RNA-binding domain in the interval 92–152 (SRLDNLVYRL…EKSRNLQVIK (61 aa)).

The protein belongs to the universal ribosomal protein uS4 family. Part of the 30S ribosomal subunit. Contacts protein S5. The interaction surface between S4 and S5 is involved in control of translational fidelity.

Its function is as follows. One of the primary rRNA binding proteins, it binds directly to 16S rRNA where it nucleates assembly of the body of the 30S subunit. In terms of biological role, with S5 and S12 plays an important role in translational accuracy. The protein is Small ribosomal subunit protein uS4 of Geobacillus kaustophilus (strain HTA426).